Here is a 387-residue protein sequence, read N- to C-terminus: 8-amino-7-oxononanoate synthase (387 aa).

Arginine 19 lines the substrate pocket. Residue 106–107 (GY) coordinates pyridoxal 5'-phosphate. Histidine 131 is a binding site for substrate. 3 residues coordinate pyridoxal 5'-phosphate: serine 177, histidine 205, and threonine 236. Lysine 239 carries the N6-(pyridoxal phosphate)lysine modification. Threonine 353 contributes to the substrate binding site.

Belongs to the class-II pyridoxal-phosphate-dependent aminotransferase family. BioF subfamily. Homodimer. The cofactor is pyridoxal 5'-phosphate.

It catalyses the reaction 6-carboxyhexanoyl-[ACP] + L-alanine + H(+) = (8S)-8-amino-7-oxononanoate + holo-[ACP] + CO2. It functions in the pathway cofactor biosynthesis; biotin biosynthesis. Its function is as follows. Catalyzes the decarboxylative condensation of pimeloyl-[acyl-carrier protein] and L-alanine to produce 8-amino-7-oxononanoate (AON), [acyl-carrier protein], and carbon dioxide. In Nitrosomonas europaea (strain ATCC 19718 / CIP 103999 / KCTC 2705 / NBRC 14298), this protein is 8-amino-7-oxononanoate synthase.